The sequence spans 300 residues: Transcription initiation factor IIB 1 (300 aa).

The segment at 3–34 (GKRVCPVCGSTEFIYDPSRGEIVCKVCGYVIE) adopts a TFIIB-type zinc-finger fold. Positions 7, 10, 26, and 29 each coordinate Zn(2+). 2 tandem repeats follow at residues 114-197 (SELD…ARHL) and 210-291 (DYVN…ELVE).

This sequence belongs to the TFIIB family.

Its function is as follows. Stabilizes TBP binding to an archaeal box-A promoter. Also responsible for recruiting RNA polymerase II to the pre-initiation complex (DNA-TBP-TFIIB). This chain is Transcription initiation factor IIB 1, found in Thermococcus kodakarensis (strain ATCC BAA-918 / JCM 12380 / KOD1) (Pyrococcus kodakaraensis (strain KOD1)).